Consider the following 101-residue polypeptide: Urease subunit beta (101 aa).

Belongs to the urease beta subunit family. In terms of assembly, heterotrimer of UreA (gamma), UreB (beta) and UreC (alpha) subunits. Three heterotrimers associate to form the active enzyme.

The protein localises to the cytoplasm. The catalysed reaction is urea + 2 H2O + H(+) = hydrogencarbonate + 2 NH4(+). Its pathway is nitrogen metabolism; urea degradation; CO(2) and NH(3) from urea (urease route): step 1/1. In Rhizobium johnstonii (strain DSM 114642 / LMG 32736 / 3841) (Rhizobium leguminosarum bv. viciae), this protein is Urease subunit beta.